The chain runs to 411 residues: LL-diaminopimelate aminotransferase (411 aa).

Substrate-binding residues include Tyr-15 and Gly-42. Residues Tyr-72, 108–109 (SK), Tyr-132, Asn-187, Tyr-218, and 246–248 (SFS) contribute to the pyridoxal 5'-phosphate site. Residues Lys-109, Tyr-132, and Asn-187 each coordinate substrate. Lys-249 is modified (N6-(pyridoxal phosphate)lysine). Pyridoxal 5'-phosphate-binding residues include Arg-257 and Asn-292. Positions 292 and 388 each coordinate substrate.

This sequence belongs to the class-I pyridoxal-phosphate-dependent aminotransferase family. LL-diaminopimelate aminotransferase subfamily. Homodimer. Pyridoxal 5'-phosphate serves as cofactor.

The catalysed reaction is (2S,6S)-2,6-diaminopimelate + 2-oxoglutarate = (S)-2,3,4,5-tetrahydrodipicolinate + L-glutamate + H2O + H(+). It functions in the pathway amino-acid biosynthesis; L-lysine biosynthesis via DAP pathway; LL-2,6-diaminopimelate from (S)-tetrahydrodipicolinate (aminotransferase route): step 1/1. Functionally, involved in the synthesis of meso-diaminopimelate (m-DAP or DL-DAP), required for both lysine and peptidoglycan biosynthesis. Catalyzes the direct conversion of tetrahydrodipicolinate to LL-diaminopimelate. The polypeptide is LL-diaminopimelate aminotransferase (Nostoc punctiforme (strain ATCC 29133 / PCC 73102)).